The primary structure comprises 192 residues: MKQMILASASPRRRELLQGLGVPFEVMSSDIEEKINTELSAPEIAKELAYQKAKDVSNKLDGDYIVIGADTIVEYNRILGKPKDADEAYQMLKLLSGKIHRVITGFAVIDCRTKKEIVDFEVTNVYFNHLSDEEINRYIETKEPMDKAGAYGIQGKASLFVSKIEGDYFNVVGLPIFKLGVVLRNHFDINLL.

The active-site Proton acceptor is the Asp70.

Belongs to the Maf family. YhdE subfamily. A divalent metal cation serves as cofactor.

It localises to the cytoplasm. The catalysed reaction is dTTP + H2O = dTMP + diphosphate + H(+). The enzyme catalyses UTP + H2O = UMP + diphosphate + H(+). Functionally, nucleoside triphosphate pyrophosphatase that hydrolyzes dTTP and UTP. May have a dual role in cell division arrest and in preventing the incorporation of modified nucleotides into cellular nucleic acids. The sequence is that of dTTP/UTP pyrophosphatase from Alkaliphilus oremlandii (strain OhILAs) (Clostridium oremlandii (strain OhILAs)).